The chain runs to 513 residues: GMP synthase [glutamine-hydrolyzing] (513 aa).

Residues 3-200 (SVLVLDFGSQ…LINIAGIRPD (198 aa)) enclose the Glutamine amidotransferase type-1 domain. Residue Cys80 is the Nucleophile of the active site. Catalysis depends on residues His174 and Glu176. Residues 201–388 (WSSKSFIEHQ…LGIPEDILMR (188 aa)) enclose the GMPS ATP-PPase domain. Residue 228–234 (SGGVDST) coordinates ATP.

Homodimer.

It carries out the reaction XMP + L-glutamine + ATP + H2O = GMP + L-glutamate + AMP + diphosphate + 2 H(+). Its pathway is purine metabolism; GMP biosynthesis; GMP from XMP (L-Gln route): step 1/1. In terms of biological role, catalyzes the synthesis of GMP from XMP. In Chlorobium luteolum (strain DSM 273 / BCRC 81028 / 2530) (Pelodictyon luteolum), this protein is GMP synthase [glutamine-hydrolyzing].